The sequence spans 507 residues: Rhamnogalacturonase A (507 aa).

The first 21 residues, Met1 to Gly21, serve as a signal peptide directing secretion. An intrachain disulfide couples Cys38 to Cys64. Asp215 acts as the Proton donor in catalysis. Cysteines 217 and 234 form a disulfide. N-linked (GlcNAc...) asparagine glycosylation occurs at Asn235. His290 is a catalytic residue. Asn317 carries an N-linked (GlcNAc...) asparagine glycan. Cystine bridges form between Cys340–Cys346 and Cys368–Cys377. Over residues Ser462–His491 the composition is skewed to low complexity. The segment at Ser462–His507 is disordered. Over residues Gly492–His507 the composition is skewed to basic residues.

The protein belongs to the glycosyl hydrolase 28 family.

The protein resides in the secreted. The catalysed reaction is Endohydrolysis of alpha-D-GalA-(1-&gt;2)-alpha-L-Rha glycosidic bond in the rhamnogalacturonan I backbone with initial inversion of anomeric configuration releasing oligosaccharides with beta-D-GalA at the reducing end.. In terms of biological role, pectinolytic enzymes consist of four classes of enzymes: pectine lyase, polygalacturonase, pectin methylesterase and rhamnogalacturonase. Hydrolyzes alpha-D-galacturonopyranosyl-(1,2)-alpha-L-rhamnopyranosyl linkages in the backbone of the hairy regions of pectins. Active against linseed rhamnogalacturonan. This is Rhamnogalacturonase A (rhgA) from Emericella nidulans (strain FGSC A4 / ATCC 38163 / CBS 112.46 / NRRL 194 / M139) (Aspergillus nidulans).